We begin with the raw amino-acid sequence, 233 residues long: Antiholin-like protein LrgB (233 aa).

Transmembrane regions (helical) follow at residues 7–27 (INTP…ATFL), 33–53 (GFFL…FLKL), 63–83 (IGGD…AIPL), 97–117 (ILGG…LIAE), 124–144 (GIIA…PVSA), 152–172 (LTSL…SKLI), and 212–232 (ISLV…ATLL).

The protein belongs to the CidB/LrgB family. LrgB subfamily.

Its subcellular location is the cell membrane. Inhibits the expression or activity of extracellular murein hydrolases by interacting, possibly with LrgA, with the holin-like proteins CidA and/or CidB. The LrgAB and CidAB proteins may affect the proton motive force of the membrane. May be involved in programmed cell death (PCD), possibly triggering PCD in response to antibiotics and environmental stresses. This chain is Antiholin-like protein LrgB, found in Staphylococcus saprophyticus subsp. saprophyticus (strain ATCC 15305 / DSM 20229 / NCIMB 8711 / NCTC 7292 / S-41).